A 130-amino-acid polypeptide reads, in one-letter code: Hypocretin neuropeptide precursor (130 aa).

A signal peptide spans 1–32; it reads MNFPSTKVPWAAVTLLLLLLLPPALLSLGVDA. At Gln33 the chain carries Pyrrolidone carboxylic acid. 2 disulfide bridges follow: Cys38-Cys44 and Cys39-Cys46. At Leu65 the chain carries Leucine amide. Methionine amide is present on Met96. Residues 97-130 constitute a propeptide that is removed on maturation; that stretch reads GRRAGAELEPHPCSGRGCPTVTTTALAPRGGSGV.

This sequence belongs to the orexin family. Specific enzymatic cleavages at paired basic residues yield the different active peptides. Restricted to neuronal cell bodies of the dorsal and lateral hypothalamus.

Its subcellular location is the rough endoplasmic reticulum. It is found in the cytoplasmic vesicle. The protein localises to the synapse. In terms of biological role, neuropeptides that play a significant role in the regulation of food intake and sleep-wakefulness, possibly by coordinating the complex behavioral and physiologic responses of these complementary homeostatic functions. A broader role in the homeostatic regulation of energy metabolism, autonomic function, hormonal balance and the regulation of body fluids, is also suggested. Its function is as follows. Binds to orexin receptors HCRTR1/OX1R and HCRTR2/OX2R with a high affinity. Stimulates food intake. Modulates pituitary luteinizing hormone secretion in an ovarian steroid-dependent manner. Binds to orexin receptor HCRTR2/OX2R only. Stimulates food intake. Modulates pituitary luteinizing hormone secretion in an ovarian steroid-dependent manner. The sequence is that of Hypocretin neuropeptide precursor (Hcrt) from Mus musculus (Mouse).